Consider the following 502-residue polypeptide: Maturase K (502 aa).

The protein belongs to the intron maturase 2 family. MatK subfamily.

The protein localises to the plastid. Its subcellular location is the chloroplast. In terms of biological role, usually encoded in the trnK tRNA gene intron. Probably assists in splicing its own and other chloroplast group II introns. The polypeptide is Maturase K (Stanleya pinnata (Prince's plume)).